We begin with the raw amino-acid sequence, 407 residues long: Na(+)-translocating NADH-quinone reductase subunit F (407 aa).

A helical membrane pass occupies residues Ile-3 to Phe-23. In terms of domain architecture, 2Fe-2S ferredoxin-type spans Gly-32 to Ile-126. [2Fe-2S] cluster is bound by residues Cys-69, Cys-75, Cys-78, and Cys-110. Positions Val-129–Lys-269 constitute an FAD-binding FR-type domain. The segment at Asp-272 to Met-389 is catalytic.

This sequence belongs to the NqrF family. As to quaternary structure, composed of six subunits; NqrA, NqrB, NqrC, NqrD, NqrE and NqrF. Requires [2Fe-2S] cluster as cofactor. FAD serves as cofactor.

The protein localises to the cell inner membrane. The enzyme catalyses a ubiquinone + n Na(+)(in) + NADH + H(+) = a ubiquinol + n Na(+)(out) + NAD(+). Functionally, NQR complex catalyzes the reduction of ubiquinone-1 to ubiquinol by two successive reactions, coupled with the transport of Na(+) ions from the cytoplasm to the periplasm. The first step is catalyzed by NqrF, which accepts electrons from NADH and reduces ubiquinone-1 to ubisemiquinone by a one-electron transfer pathway. The polypeptide is Na(+)-translocating NADH-quinone reductase subunit F (Vibrio parahaemolyticus serotype O3:K6 (strain RIMD 2210633)).